Here is a 615-residue protein sequence, read N- to C-terminus: 1-deoxy-D-xylulose-5-phosphate synthase (615 aa).

Thiamine diphosphate is bound by residues His-72 and 111 to 113; that span reads GHS. Asp-142 provides a ligand contact to Mg(2+). Residues 143 to 144, Asn-171, Tyr-278, and Glu-360 each bind thiamine diphosphate; that span reads GA. Asn-171 contributes to the Mg(2+) binding site.

It belongs to the transketolase family. DXPS subfamily. Homodimer. The cofactor is Mg(2+). It depends on thiamine diphosphate as a cofactor.

It carries out the reaction D-glyceraldehyde 3-phosphate + pyruvate + H(+) = 1-deoxy-D-xylulose 5-phosphate + CO2. The protein operates within metabolic intermediate biosynthesis; 1-deoxy-D-xylulose 5-phosphate biosynthesis; 1-deoxy-D-xylulose 5-phosphate from D-glyceraldehyde 3-phosphate and pyruvate: step 1/1. Catalyzes the acyloin condensation reaction between C atoms 2 and 3 of pyruvate and glyceraldehyde 3-phosphate to yield 1-deoxy-D-xylulose-5-phosphate (DXP). In Campylobacter jejuni subsp. doylei (strain ATCC BAA-1458 / RM4099 / 269.97), this protein is 1-deoxy-D-xylulose-5-phosphate synthase.